The following is a 155-amino-acid chain: Small ribosomal subunit protein uS7c (155 aa).

This sequence belongs to the universal ribosomal protein uS7 family. In terms of assembly, part of the 30S ribosomal subunit.

It localises to the plastid. It is found in the chloroplast. One of the primary rRNA binding proteins, it binds directly to 16S rRNA where it nucleates assembly of the head domain of the 30S subunit. The polypeptide is Small ribosomal subunit protein uS7c (rps7) (Butomus umbellatus (Flowering rush)).